The primary structure comprises 77 residues: Acyl carrier protein (77 aa).

Positions 1–76 (MSLEDDVKAI…DVIKYIQERQ (76 aa)) constitute a Carrier domain. Serine 36 is subject to O-(pantetheine 4'-phosphoryl)serine.

The protein belongs to the acyl carrier protein (ACP) family. In terms of processing, 4'-phosphopantetheine is transferred from CoA to a specific serine of apo-ACP by AcpS. This modification is essential for activity because fatty acids are bound in thioester linkage to the sulfhydryl of the prosthetic group.

Its subcellular location is the cytoplasm. It participates in lipid metabolism; fatty acid biosynthesis. Its function is as follows. Carrier of the growing fatty acid chain in fatty acid biosynthesis. The protein is Acyl carrier protein of Chlamydia muridarum (strain MoPn / Nigg).